A 267-amino-acid chain; its full sequence is Formamidopyrimidine-DNA glycosylase (267 aa).

Pro2 acts as the Schiff-base intermediate with DNA in catalysis. Glu3 (proton donor) is an active-site residue. Lys58 (proton donor; for beta-elimination activity) is an active-site residue. Positions 91, 110, and 152 each coordinate DNA. The FPG-type zinc finger occupies 233–267 (DVYGRGTDACTRCGGALEEIRLGNRSTVFCPRCQT). The active-site Proton donor; for delta-elimination activity is Arg257.

This sequence belongs to the FPG family. In terms of assembly, monomer. The cofactor is Zn(2+).

It carries out the reaction Hydrolysis of DNA containing ring-opened 7-methylguanine residues, releasing 2,6-diamino-4-hydroxy-5-(N-methyl)formamidopyrimidine.. The enzyme catalyses 2'-deoxyribonucleotide-(2'-deoxyribose 5'-phosphate)-2'-deoxyribonucleotide-DNA = a 3'-end 2'-deoxyribonucleotide-(2,3-dehydro-2,3-deoxyribose 5'-phosphate)-DNA + a 5'-end 5'-phospho-2'-deoxyribonucleoside-DNA + H(+). Functionally, involved in base excision repair of DNA damaged by oxidation or by mutagenic agents. Acts as a DNA glycosylase that recognizes and removes damaged bases. Has a preference for oxidized purines, such as 7,8-dihydro-8-oxoguanine (8-oxoG). Has AP (apurinic/apyrimidinic) lyase activity and introduces nicks in the DNA strand. Cleaves the DNA backbone by beta-delta elimination to generate a single-strand break at the site of the removed base with both 3'- and 5'-phosphates. The protein is Formamidopyrimidine-DNA glycosylase of Geobacter metallireducens (strain ATCC 53774 / DSM 7210 / GS-15).